Consider the following 227-residue polypeptide: Agamous-like MADS-box protein AGL17 (227 aa).

The MADS-box domain maps to Arg-3–Phe-57. The K-box domain occupies Val-86–Glu-176.

As to expression, preferentially expressed in roots.

The protein localises to the nucleus. Functionally, probable transcription factor. This Arabidopsis thaliana (Mouse-ear cress) protein is Agamous-like MADS-box protein AGL17 (AGL17).